Here is a 344-residue protein sequence, read N- to C-terminus: Holliday junction branch migration complex subunit RuvB (344 aa).

The segment at 1-182 is large ATPase domain (RuvB-L); the sequence is MSDRLISATA…FGIISRLEFY (182 aa). ATP-binding positions include leucine 21, arginine 22, glycine 63, lysine 66, threonine 67, threonine 68, 129-131, arginine 172, tyrosine 182, and arginine 219; that span reads EDF. Threonine 67 is a binding site for Mg(2+). The small ATPAse domain (RuvB-S) stretch occupies residues 183–253; the sequence is NNEDLTRIVT…VAAEALEFFE (71 aa). The interval 256 to 344 is head domain (RuvB-H); that stretch reads PLGLDHTDRR…QKGLEQNSLF (89 aa). Residues arginine 311 and arginine 316 each contribute to the DNA site.

This sequence belongs to the RuvB family. As to quaternary structure, homohexamer. Forms an RuvA(8)-RuvB(12)-Holliday junction (HJ) complex. HJ DNA is sandwiched between 2 RuvA tetramers; dsDNA enters through RuvA and exits via RuvB. An RuvB hexamer assembles on each DNA strand where it exits the tetramer. Each RuvB hexamer is contacted by two RuvA subunits (via domain III) on 2 adjacent RuvB subunits; this complex drives branch migration. In the full resolvosome a probable DNA-RuvA(4)-RuvB(12)-RuvC(2) complex forms which resolves the HJ.

The protein resides in the cytoplasm. It carries out the reaction ATP + H2O = ADP + phosphate + H(+). Its function is as follows. The RuvA-RuvB-RuvC complex processes Holliday junction (HJ) DNA during genetic recombination and DNA repair, while the RuvA-RuvB complex plays an important role in the rescue of blocked DNA replication forks via replication fork reversal (RFR). RuvA specifically binds to HJ cruciform DNA, conferring on it an open structure. The RuvB hexamer acts as an ATP-dependent pump, pulling dsDNA into and through the RuvAB complex. RuvB forms 2 homohexamers on either side of HJ DNA bound by 1 or 2 RuvA tetramers; 4 subunits per hexamer contact DNA at a time. Coordinated motions by a converter formed by DNA-disengaged RuvB subunits stimulates ATP hydrolysis and nucleotide exchange. Immobilization of the converter enables RuvB to convert the ATP-contained energy into a lever motion, pulling 2 nucleotides of DNA out of the RuvA tetramer per ATP hydrolyzed, thus driving DNA branch migration. The RuvB motors rotate together with the DNA substrate, which together with the progressing nucleotide cycle form the mechanistic basis for DNA recombination by continuous HJ branch migration. Branch migration allows RuvC to scan DNA until it finds its consensus sequence, where it cleaves and resolves cruciform DNA. In Desulforamulus reducens (strain ATCC BAA-1160 / DSM 100696 / MI-1) (Desulfotomaculum reducens), this protein is Holliday junction branch migration complex subunit RuvB.